We begin with the raw amino-acid sequence, 380 residues long: Septin homolog spn4 (380 aa).

The Septin-type G domain maps to 25-298 (NGVAFTLMLC…EQYRQEQMKV (274 aa)). The segment at 35–42 (GESGLGKT) is G1 motif. GTP contacts are provided by residues 35–42 (GESGLGKT), Thr-70, Gly-96, 175–183 (KADMYTRRD), Gly-231, and Arg-247. The G3 motif stretch occupies residues 93–96 (DTPG). The tract at residues 174–177 (AKAD) is G4 motif.

The protein belongs to the TRAFAC class TrmE-Era-EngA-EngB-Septin-like GTPase superfamily. Septin GTPase family. As to quaternary structure, component of the septin complex composed of two copies of each spn1, spn2, spn3 and spn4.

Its subcellular location is the cytoplasm. The protein localises to the cell cortex. Plays a role in the cell cycle. Involved in a late stage of septum formation leading to the separation of the daughter cells. The chain is Septin homolog spn4 (spn4) from Schizosaccharomyces pombe (strain 972 / ATCC 24843) (Fission yeast).